The chain runs to 319 residues: ATP-dependent 6-phosphofructokinase (319 aa).

ATP is bound at residue G11. ADP is bound at residue 21-25; the sequence is RAVVR. ATP contacts are provided by residues 72–73 and 102–105; these read RC and GDGS. D103 provides a ligand contact to Mg(2+). 125 to 127 contacts substrate; sequence TID. The Proton acceptor role is filled by D127. R154 serves as a coordination point for ADP. Substrate is bound by residues R162 and 169–171; that span reads MGR. Residues 185-187, R211, and 213-215 each bind ADP; these read GAE and KKH. Substrate-binding positions include E222, R243, and 249–252; that span reads HIQR.

Belongs to the phosphofructokinase type A (PFKA) family. ATP-dependent PFK group I subfamily. Prokaryotic clade 'B1' sub-subfamily. As to quaternary structure, homotetramer. The cofactor is Mg(2+).

The protein localises to the cytoplasm. The enzyme catalyses beta-D-fructose 6-phosphate + ATP = beta-D-fructose 1,6-bisphosphate + ADP + H(+). It functions in the pathway carbohydrate degradation; glycolysis; D-glyceraldehyde 3-phosphate and glycerone phosphate from D-glucose: step 3/4. With respect to regulation, allosterically activated by ADP and other diphosphonucleosides, and allosterically inhibited by phosphoenolpyruvate. Functionally, catalyzes the phosphorylation of D-fructose 6-phosphate to fructose 1,6-bisphosphate by ATP, the first committing step of glycolysis. The protein is ATP-dependent 6-phosphofructokinase of Halalkalibacterium halodurans (strain ATCC BAA-125 / DSM 18197 / FERM 7344 / JCM 9153 / C-125) (Bacillus halodurans).